The following is a 317-amino-acid chain: UDP-3-O-acylglucosamine N-acyltransferase (317 aa).

His229 functions as the Proton acceptor in the catalytic mechanism.

The protein belongs to the transferase hexapeptide repeat family. LpxD subfamily. Homotrimer.

The catalysed reaction is a UDP-3-O-[(3R)-3-hydroxyacyl]-alpha-D-glucosamine + a (3R)-hydroxyacyl-[ACP] = a UDP-2-N,3-O-bis[(3R)-3-hydroxyacyl]-alpha-D-glucosamine + holo-[ACP] + H(+). It participates in bacterial outer membrane biogenesis; LPS lipid A biosynthesis. Its function is as follows. Catalyzes the N-acylation of UDP-3-O-acylglucosamine using 3-hydroxyacyl-ACP as the acyl donor. Is involved in the biosynthesis of lipid A, a phosphorylated glycolipid that anchors the lipopolysaccharide to the outer membrane of the cell. The sequence is that of UDP-3-O-acylglucosamine N-acyltransferase from Campylobacter concisus (strain 13826).